A 349-amino-acid polypeptide reads, in one-letter code: Isopentenyl-diphosphate delta-isomerase (349 aa).

A substrate-binding site is contributed by 6 to 7; that stretch reads RK. FMN contacts are provided by residues 62–64, serine 93, and asparagine 122; that span reads AMT. Substrate is bound at residue glutamine 152. Position 153 (glutamate 153) interacts with Mg(2+). FMN-binding positions include lysine 184, threonine 214, 258–259, and 280–281; these read GG and AG.

It belongs to the IPP isomerase type 2 family. As to quaternary structure, homooctamer. Dimer of tetramers. It depends on FMN as a cofactor. NADPH serves as cofactor. Mg(2+) is required as a cofactor.

The protein localises to the cytoplasm. It carries out the reaction isopentenyl diphosphate = dimethylallyl diphosphate. Involved in the biosynthesis of isoprenoids. Catalyzes the 1,3-allylic rearrangement of the homoallylic substrate isopentenyl (IPP) to its allylic isomer, dimethylallyl diphosphate (DMAPP). The protein is Isopentenyl-diphosphate delta-isomerase of Bacillus cereus (strain ATCC 14579 / DSM 31 / CCUG 7414 / JCM 2152 / NBRC 15305 / NCIMB 9373 / NCTC 2599 / NRRL B-3711).